A 193-amino-acid chain; its full sequence is Thymidine kinase (193 aa).

Residues 9-16 and 87-90 each bind ATP; these read STMNAGKS and DEAQ. Glu88 functions as the Proton acceptor in the catalytic mechanism. Cys145, Cys147, Cys182, and His185 together coordinate Zn(2+).

It belongs to the thymidine kinase family. In terms of assembly, homotetramer.

It is found in the cytoplasm. The catalysed reaction is thymidine + ATP = dTMP + ADP + H(+). In Haemophilus influenzae (strain ATCC 51907 / DSM 11121 / KW20 / Rd), this protein is Thymidine kinase.